Consider the following 198-residue polypeptide: Nascent polypeptide-associated complex subunit alpha (198 aa).

The NAC-A/B domain maps to 48-113; sequence ITRVVLKRTR…QAAAETGSVS (66 aa). Residues 159-198 form the UBA domain; the sequence is LEDSDIKLVMEQANVSRNKAINGLKKNDSDVVNTIMDLCK.

This sequence belongs to the NAC-alpha family. Part of the nascent polypeptide-associated complex (NAC), consisting of EGD2 and EGD1. NAC associates with ribosomes via EGD1.

Its subcellular location is the cytoplasm. It is found in the nucleus. In terms of biological role, component of the nascent polypeptide-associated complex (NAC), a dynamic component of the ribosomal exit tunnel, protecting the emerging polypeptides from interaction with other cytoplasmic proteins to ensure appropriate nascent protein targeting. The NAC complex also promotes mitochondrial protein import by enhancing productive ribosome interactions with the outer mitochondrial membrane and blocks the inappropriate interaction of ribosomes translating non-secretory nascent polypeptides with translocation sites in the membrane of the endoplasmic reticulum. EGD2 may also be involved in transcription regulation. The polypeptide is Nascent polypeptide-associated complex subunit alpha (EGD2) (Yarrowia lipolytica (strain CLIB 122 / E 150) (Yeast)).